Consider the following 353-residue polypeptide: MSEPLKPRIDFEQPLQSLDEPVLKSAQAFDEQAAEKFYPAAPELDAEDEEGRVEGLVNAALKPKRSLWRKMVTAGMVILGASVIAQSVQWVNQAWQQQDWIALGATTAGGLIILAGVGSVVTEWRRLYHLRQRAEERDIARALLVSHGVGQGRVFCEKLARQAGLDQGHPALQRWLASLHETHNDREVVELYAKLVQPALDNQARAEISRYAAESALMIAVSPLALVDMAFIAWRNIRLINRIAALYGIELGYFSRIRLFRLVLLNIAFAGASELVREVGMDWLSQDLAARLSARAAQGIGAGLLTARLGIKAMELCRPLPWLEGDKPKLGDFRRQLMNQLKNTLPKKDKTAH.

3 helical membrane passes run 71–91 (MVTA…VQWV), 101–121 (IALG…GSVV), and 214–234 (ESAL…FIAW).

The protein belongs to the UPF0283 family.

It localises to the cell inner membrane. In Yersinia pseudotuberculosis serotype IB (strain PB1/+), this protein is UPF0283 membrane protein YPTS_2342.